The chain runs to 398 residues: Meiosis-specific protein SPO11 (398 aa).

The 136-residue stretch at 40–175 (CSNADVLAHI…LNIIPAQKGL (136 aa)) folds into the Topo IIA-type catalytic domain. Y135 acts as the O-(5'-phospho-DNA)-tyrosine intermediate in catalysis. Mg(2+) contacts are provided by E233 and D288.

It belongs to the TOP6A family. Requires Mg(2+) as cofactor.

It localises to the nucleus. The protein localises to the chromosome. It catalyses the reaction ATP-dependent breakage, passage and rejoining of double-stranded DNA.. Required for meiotic recombination. Mediates DNA cleavage that forms the double-strand breaks (DSB) that initiate meiotic recombination. The action of SPO11 is important in setting off a regulatory chain of events encompassing 5' to 3' resection. When there are no SPO11-DSBs, resection of a site specific VDE-DSB takes place but it is faster than in wild-type meiosis and increases the risk of uncovering flanking homology. In Saccharomyces cerevisiae (strain ATCC 204508 / S288c) (Baker's yeast), this protein is Meiosis-specific protein SPO11 (SPO11).